Here is a 243-residue protein sequence, read N- to C-terminus: Ubiquinone/menaquinone biosynthesis C-methyltransferase UbiE (243 aa).

S-adenosyl-L-methionine is bound by residues T69, D90, and 116-117 (DA).

The protein belongs to the class I-like SAM-binding methyltransferase superfamily. MenG/UbiE family.

It carries out the reaction a 2-demethylmenaquinol + S-adenosyl-L-methionine = a menaquinol + S-adenosyl-L-homocysteine + H(+). It catalyses the reaction a 2-methoxy-6-(all-trans-polyprenyl)benzene-1,4-diol + S-adenosyl-L-methionine = a 5-methoxy-2-methyl-3-(all-trans-polyprenyl)benzene-1,4-diol + S-adenosyl-L-homocysteine + H(+). It functions in the pathway quinol/quinone metabolism; menaquinone biosynthesis; menaquinol from 1,4-dihydroxy-2-naphthoate: step 2/2. The protein operates within cofactor biosynthesis; ubiquinone biosynthesis. Methyltransferase required for the conversion of demethylmenaquinol (DMKH2) to menaquinol (MKH2) and the conversion of 2-polyprenyl-6-methoxy-1,4-benzoquinol (DDMQH2) to 2-polyprenyl-3-methyl-6-methoxy-1,4-benzoquinol (DMQH2). The sequence is that of Ubiquinone/menaquinone biosynthesis C-methyltransferase UbiE from Burkholderia cenocepacia (strain HI2424).